Reading from the N-terminus, the 209-residue chain is Thiamine-phosphate synthase (209 aa).

4-amino-2-methyl-5-(diphosphooxymethyl)pyrimidine is bound by residues 36 to 40 (QYRDK) and Asn68. Asp69 and Asp87 together coordinate Mg(2+). Thr106 serves as a coordination point for 4-amino-2-methyl-5-(diphosphooxymethyl)pyrimidine. 2-[(2R,5Z)-2-carboxy-4-methylthiazol-5(2H)-ylidene]ethyl phosphate is bound at residue 133-135 (SST). Residue Lys136 coordinates 4-amino-2-methyl-5-(diphosphooxymethyl)pyrimidine. 2-[(2R,5Z)-2-carboxy-4-methylthiazol-5(2H)-ylidene]ethyl phosphate is bound at residue Gly163.

It belongs to the thiamine-phosphate synthase family. Mg(2+) serves as cofactor.

It catalyses the reaction 2-[(2R,5Z)-2-carboxy-4-methylthiazol-5(2H)-ylidene]ethyl phosphate + 4-amino-2-methyl-5-(diphosphooxymethyl)pyrimidine + 2 H(+) = thiamine phosphate + CO2 + diphosphate. The catalysed reaction is 2-(2-carboxy-4-methylthiazol-5-yl)ethyl phosphate + 4-amino-2-methyl-5-(diphosphooxymethyl)pyrimidine + 2 H(+) = thiamine phosphate + CO2 + diphosphate. It carries out the reaction 4-methyl-5-(2-phosphooxyethyl)-thiazole + 4-amino-2-methyl-5-(diphosphooxymethyl)pyrimidine + H(+) = thiamine phosphate + diphosphate. It participates in cofactor biosynthesis; thiamine diphosphate biosynthesis; thiamine phosphate from 4-amino-2-methyl-5-diphosphomethylpyrimidine and 4-methyl-5-(2-phosphoethyl)-thiazole: step 1/1. Functionally, condenses 4-methyl-5-(beta-hydroxyethyl)thiazole monophosphate (THZ-P) and 2-methyl-4-amino-5-hydroxymethyl pyrimidine pyrophosphate (HMP-PP) to form thiamine monophosphate (TMP). The sequence is that of Thiamine-phosphate synthase from Azotobacter vinelandii (strain DJ / ATCC BAA-1303).